A 359-amino-acid polypeptide reads, in one-letter code: 3-isopropylmalate dehydrogenase (359 aa).

Position 74–85 (74–85 (GPKWGTGSVRPE)) interacts with NAD(+). Substrate contacts are provided by Arg-92, Arg-102, Arg-131, and Asp-220. Mg(2+)-binding residues include Asp-220, Asp-245, and Asp-249. Residue 284-295 (GSAPDLPANKVN) participates in NAD(+) binding.

It belongs to the isocitrate and isopropylmalate dehydrogenases family. As to quaternary structure, homodimer. The cofactor is Mg(2+). It depends on Mn(2+) as a cofactor.

It is found in the cytoplasm. The catalysed reaction is (2R,3S)-3-isopropylmalate + NAD(+) = 4-methyl-2-oxopentanoate + CO2 + NADH. It functions in the pathway amino-acid biosynthesis; L-leucine biosynthesis; L-leucine from 3-methyl-2-oxobutanoate: step 3/4. Catalyzes the oxidation of 3-carboxy-2-hydroxy-4-methylpentanoate (3-isopropylmalate) to 3-carboxy-4-methyl-2-oxopentanoate. The product decarboxylates to 4-methyl-2 oxopentanoate. In Kluyveromyces marxianus (Yeast), this protein is 3-isopropylmalate dehydrogenase (LEU2).